Consider the following 315-residue polypeptide: Ribose-phosphate pyrophosphokinase (315 aa).

Residues 37-39 (DGE) and 96-97 (RQ) contribute to the ATP site. Mg(2+) contacts are provided by histidine 131 and aspartate 170. Lysine 194 is an active-site residue. D-ribose 5-phosphate is bound by residues arginine 196, aspartate 220, and 224–228 (DTGGT).

Belongs to the ribose-phosphate pyrophosphokinase family. Class I subfamily. As to quaternary structure, homohexamer. It depends on Mg(2+) as a cofactor.

The protein resides in the cytoplasm. It carries out the reaction D-ribose 5-phosphate + ATP = 5-phospho-alpha-D-ribose 1-diphosphate + AMP + H(+). Its pathway is metabolic intermediate biosynthesis; 5-phospho-alpha-D-ribose 1-diphosphate biosynthesis; 5-phospho-alpha-D-ribose 1-diphosphate from D-ribose 5-phosphate (route I): step 1/1. Involved in the biosynthesis of the central metabolite phospho-alpha-D-ribosyl-1-pyrophosphate (PRPP) via the transfer of pyrophosphoryl group from ATP to 1-hydroxyl of ribose-5-phosphate (Rib-5-P). The chain is Ribose-phosphate pyrophosphokinase from Shewanella oneidensis (strain ATCC 700550 / JCM 31522 / CIP 106686 / LMG 19005 / NCIMB 14063 / MR-1).